A 237-amino-acid polypeptide reads, in one-letter code: MQQSKEERVHDVFEKISDKYDVMNSVISFQRHKAWRKETMRIMDVKPGSKALDVCCGTADWTIALAGAVGEDGKVYGLDFSENMLAVGKQKVEALELKQVELIHGNAMELPYEDNTFDYVTIGFGLRNVPDYMQVLKEMTRVVKPGGKVICLETSQPTMIGFRQGYVLYFKYIMPLFGKMFAKSYKEYSWLQESASTFPGMKELACMFEEAGLKNVQVKPFTFGVAAMHLGIKPESK.

S-adenosyl-L-methionine-binding positions include Thr-58, Asp-79, and 106–107 (NA).

This sequence belongs to the class I-like SAM-binding methyltransferase superfamily. MenG/UbiE family.

The enzyme catalyses a 2-demethylmenaquinol + S-adenosyl-L-methionine = a menaquinol + S-adenosyl-L-homocysteine + H(+). The protein operates within quinol/quinone metabolism; menaquinone biosynthesis; menaquinol from 1,4-dihydroxy-2-naphthoate: step 2/2. Methyltransferase required for the conversion of demethylmenaquinol (DMKH2) to menaquinol (MKH2). This chain is Demethylmenaquinone methyltransferase, found in Bacillus mycoides (strain KBAB4) (Bacillus weihenstephanensis).